Here is a 31-residue protein sequence, read N- to C-terminus: Alcohol dehydrogenase 1 (31 aa).

Residue C7 participates in Zn(2+) binding.

It belongs to the zinc-containing alcohol dehydrogenase family. Class-P subfamily. Homodimer. Requires Zn(2+) as cofactor.

Its subcellular location is the cytoplasm. It catalyses the reaction a primary alcohol + NAD(+) = an aldehyde + NADH + H(+). It carries out the reaction a secondary alcohol + NAD(+) = a ketone + NADH + H(+). This Catharanthus roseus (Madagascar periwinkle) protein is Alcohol dehydrogenase 1.